The sequence spans 362 residues: MPKTAMTDSTSKTSTNTASSDMAAEFDSTTARLNASLSKPQLNADGHLRHFLGIEGLSRAQLLAIIHKAESFFDDKGQLINSPELEGCTVMNLFFEPSTRTRTTFEVAEKRLGANVLNIDIARSSTQKGESLRDTLWNLQAMTADIFVVRHSASGAAHFMATEVTPDIAIINGGDGWHAHPTQAMLDMLTIHREAPRPFEELTVAIIGDIKHSRVARSDIAALKILGVKEIRVIAPRTLLPKGIERYGVKVFENIDEGVVDCDVLMGLRIQNERIGSPLMAASNEYFKKYGITPERVAKAKPDALVMHPGPMNRGVEIASSVADGPQSVILKQVNNGIAVRMAVLSMAMQGQREYQALRSST.

Residues methionine 1 to methionine 22 form a disordered region. Low complexity predominate over residues threonine 7–serine 20. Carbamoyl phosphate-binding residues include arginine 100 and threonine 101. Lysine 128 lines the L-aspartate pocket. Residues arginine 150, histidine 180, and glutamine 183 each coordinate carbamoyl phosphate. Arginine 214 and arginine 269 together coordinate L-aspartate. Carbamoyl phosphate contacts are provided by glycine 310 and proline 311.

The protein belongs to the aspartate/ornithine carbamoyltransferase superfamily. ATCase family. In terms of assembly, heterododecamer (2C3:3R2) of six catalytic PyrB chains organized as two trimers (C3), and six regulatory PyrI chains organized as three dimers (R2).

It catalyses the reaction carbamoyl phosphate + L-aspartate = N-carbamoyl-L-aspartate + phosphate + H(+). Its pathway is pyrimidine metabolism; UMP biosynthesis via de novo pathway; (S)-dihydroorotate from bicarbonate: step 2/3. Its function is as follows. Catalyzes the condensation of carbamoyl phosphate and aspartate to form carbamoyl aspartate and inorganic phosphate, the committed step in the de novo pyrimidine nucleotide biosynthesis pathway. The chain is Aspartate carbamoyltransferase catalytic subunit from Psychrobacter sp. (strain PRwf-1).